A 220-amino-acid chain; its full sequence is Urease accessory protein UreF (220 aa).

The protein belongs to the UreF family. In terms of assembly, ureD, UreF and UreG form a complex that acts as a GTP-hydrolysis-dependent molecular chaperone, activating the urease apoprotein by helping to assemble the nickel containing metallocenter of UreC. The UreE protein probably delivers the nickel.

It localises to the cytoplasm. Functionally, required for maturation of urease via the functional incorporation of the urease nickel metallocenter. The protein is Urease accessory protein UreF of Bordetella bronchiseptica (strain ATCC BAA-588 / NCTC 13252 / RB50) (Alcaligenes bronchisepticus).